Consider the following 703-residue polypeptide: Cycloartenol synthase (703 aa).

PFTB repeat units follow at residues 59-103 and 106-148; these read IKKA…QLPE and QREI…RLLG. The active-site Proton donor is D435. PFTB repeat units lie at residues 461-503, 539-579, 587-628, and 645-686; these read IADG…QNIM, IARG…VASG, IVKA…VNTG, and IERG…KNIF.

Belongs to the terpene cyclase/mutase family.

It carries out the reaction (S)-2,3-epoxysqualene = cycloartenol. Converts oxidosqualene to cycloartenol (in vitro). The polypeptide is Cycloartenol synthase (cas1) (Dictyostelium discoideum (Social amoeba)).